Reading from the N-terminus, the 372-residue chain is Phospho-N-acetylmuramoyl-pentapeptide-transferase (372 aa).

A run of 10 helical transmembrane segments spans residues 2-22 (LVWLFSWLGHYYAPFYAVSSL), 71-91 (TPTMGGVLILSAIGVSTLLWA), 98-118 (VWILLIVMIIFGAVGWADDWL), 134-154 (YFWLSMGALFVGISLYYIATL), 176-196 (MIPFSAVPFGIGFIIFTYFVI), 211-231 (GLAILPVVLVAAGLGAMAYVS), 251-271 (VIIVCGAMIGAGLGFLWFNAH), 275-295 (VFMGDVGALSLGAMLGTIAVM), 300-320 (IAFAIMGGLFVAEALSVMLQV), and 349-369 (QVVARFWIIAIILVILGLMTL).

The protein belongs to the glycosyltransferase 4 family. MraY subfamily. Mg(2+) is required as a cofactor.

The protein localises to the cell inner membrane. The enzyme catalyses UDP-N-acetyl-alpha-D-muramoyl-L-alanyl-gamma-D-glutamyl-meso-2,6-diaminopimeloyl-D-alanyl-D-alanine + di-trans,octa-cis-undecaprenyl phosphate = di-trans,octa-cis-undecaprenyl diphospho-N-acetyl-alpha-D-muramoyl-L-alanyl-D-glutamyl-meso-2,6-diaminopimeloyl-D-alanyl-D-alanine + UMP. The protein operates within cell wall biogenesis; peptidoglycan biosynthesis. Its function is as follows. Catalyzes the initial step of the lipid cycle reactions in the biosynthesis of the cell wall peptidoglycan: transfers peptidoglycan precursor phospho-MurNAc-pentapeptide from UDP-MurNAc-pentapeptide onto the lipid carrier undecaprenyl phosphate, yielding undecaprenyl-pyrophosphoryl-MurNAc-pentapeptide, known as lipid I. This Psychrobacter cryohalolentis (strain ATCC BAA-1226 / DSM 17306 / VKM B-2378 / K5) protein is Phospho-N-acetylmuramoyl-pentapeptide-transferase.